A 377-amino-acid polypeptide reads, in one-letter code: Putrescine transport ATP-binding protein PotG (377 aa).

One can recognise an ABC transporter domain in the interval 20 to 250 (LEIRNLTKSY…PTTRYSAEFI (231 aa)). 52-59 (GASGCGKS) provides a ligand contact to ATP.

This sequence belongs to the ABC transporter superfamily. The complex is composed of two ATP-binding proteins (PotG), two transmembrane proteins (PotH and PotI) and a solute-binding protein (PotF).

The protein localises to the cell inner membrane. The catalysed reaction is putrescine(out) + ATP + H2O = putrescine(in) + ADP + phosphate + H(+). Its activity is regulated as follows. Transport is feedback inhibited by intracellular polyamines. In terms of biological role, part of the ABC transporter complex PotFGHI involved in putrescine uptake. Responsible for energy coupling to the transport system. Imports putrescine for maintenance of the optimal concentration of polyamines necessary for cell growth in the presence of glucose. The polypeptide is Putrescine transport ATP-binding protein PotG (Escherichia coli (strain K12)).